A 344-amino-acid polypeptide reads, in one-letter code: Phosphate acyltransferase (344 aa).

Belongs to the PlsX family. As to quaternary structure, homodimer. Probably interacts with PlsY.

It is found in the cytoplasm. It carries out the reaction a fatty acyl-[ACP] + phosphate = an acyl phosphate + holo-[ACP]. The protein operates within lipid metabolism; phospholipid metabolism. Its function is as follows. Catalyzes the reversible formation of acyl-phosphate (acyl-PO(4)) from acyl-[acyl-carrier-protein] (acyl-ACP). This enzyme utilizes acyl-ACP as fatty acyl donor, but not acyl-CoA. The polypeptide is Phosphate acyltransferase (Sphingopyxis alaskensis (strain DSM 13593 / LMG 18877 / RB2256) (Sphingomonas alaskensis)).